The chain runs to 98 residues: Large ribosomal subunit protein uL23 (98 aa).

Belongs to the universal ribosomal protein uL23 family. As to quaternary structure, part of the 50S ribosomal subunit. Contacts protein L29, and trigger factor when it is bound to the ribosome.

Its function is as follows. One of the early assembly proteins it binds 23S rRNA. One of the proteins that surrounds the polypeptide exit tunnel on the outside of the ribosome. Forms the main docking site for trigger factor binding to the ribosome. The protein is Large ribosomal subunit protein uL23 of Cereibacter sphaeroides (strain ATCC 17029 / ATH 2.4.9) (Rhodobacter sphaeroides).